Reading from the N-terminus, the 134-residue chain is Fluoride-specific ion channel FluC 2 (134 aa).

A run of 4 helical transmembrane segments spans residues 8 to 28 (IVAI…LNTW), 40 to 60 (IENI…LVIV), 69 to 89 (LGVG…DSVL), and 99 to 119 (LIYV…GYLL). G75 and T78 together coordinate Na(+).

This sequence belongs to the fluoride channel Fluc/FEX (TC 1.A.43) family.

It localises to the cell membrane. The enzyme catalyses fluoride(in) = fluoride(out). Its activity is regulated as follows. Na(+) is not transported, but it plays an essential structural role and its presence is essential for fluoride channel function. Its function is as follows. Fluoride-specific ion channel. Important for reducing fluoride concentration in the cell, thus reducing its toxicity. This is Fluoride-specific ion channel FluC 2 from Halalkalibacterium halodurans (strain ATCC BAA-125 / DSM 18197 / FERM 7344 / JCM 9153 / C-125) (Bacillus halodurans).